The chain runs to 841 residues: Translation initiation factor IF-2 (841 aa).

One can recognise a tr-type G domain in the interval 341-508 (NRAPVVTIMG…AILLQAEILE (168 aa)). Residues 350–357 (GHVDHGKT) are G1. 350–357 (GHVDHGKT) serves as a coordination point for GTP. A G2 region spans residues 375 to 379 (GITQC). The interval 396–399 (DTPG) is G3. GTP is bound by residues 396 to 400 (DTPGH) and 450 to 453 (NKID). Residues 450-453 (NKID) form a G4 region. The interval 486-488 (SAK) is G5.

The protein belongs to the TRAFAC class translation factor GTPase superfamily. Classic translation factor GTPase family. IF-2 subfamily.

Its subcellular location is the cytoplasm. Functionally, one of the essential components for the initiation of protein synthesis. Protects formylmethionyl-tRNA from spontaneous hydrolysis and promotes its binding to the 30S ribosomal subunits. Also involved in the hydrolysis of GTP during the formation of the 70S ribosomal complex. This Wigglesworthia glossinidia brevipalpis protein is Translation initiation factor IF-2.